Here is a 116-residue protein sequence, read N- to C-terminus: NADPH-dependent 7-cyano-7-deazaguanine reductase (116 aa).

The active-site Thioimide intermediate is Cys-31. Asp-38 functions as the Proton donor in the catalytic mechanism. Residues 53–55 and 72–73 contribute to the substrate site; these read VEL and YE.

This sequence belongs to the GTP cyclohydrolase I family. QueF type 1 subfamily.

Its subcellular location is the cytoplasm. It carries out the reaction 7-aminomethyl-7-carbaguanine + 2 NADP(+) = 7-cyano-7-deazaguanine + 2 NADPH + 3 H(+). It functions in the pathway tRNA modification; tRNA-queuosine biosynthesis. Catalyzes the NADPH-dependent reduction of 7-cyano-7-deazaguanine (preQ0) to 7-aminomethyl-7-deazaguanine (preQ1). The polypeptide is NADPH-dependent 7-cyano-7-deazaguanine reductase (Chlorobium phaeobacteroides (strain DSM 266 / SMG 266 / 2430)).